Here is a 143-residue protein sequence, read N- to C-terminus: MTIERTFSIIKPNAVAKNVIGSIFARFESAGFKIVGTKMLHLTVEQARGFYAEHDGKPFFDGLVEFMTSGPIVVSVLESENAVQRHRDLLGATNPANALAGTLRADYADSFTENGTHGSDSVESAAREIAYFFAEGEVCPRTR.

ATP-binding residues include K11, F59, R87, T93, R104, and N114. The active-site Pros-phosphohistidine intermediate is H117.

The protein belongs to the NDK family. As to quaternary structure, homotetramer. Mg(2+) is required as a cofactor.

The protein resides in the cytoplasm. It carries out the reaction a 2'-deoxyribonucleoside 5'-diphosphate + ATP = a 2'-deoxyribonucleoside 5'-triphosphate + ADP. The catalysed reaction is a ribonucleoside 5'-diphosphate + ATP = a ribonucleoside 5'-triphosphate + ADP. Major role in the synthesis of nucleoside triphosphates other than ATP. The ATP gamma phosphate is transferred to the NDP beta phosphate via a ping-pong mechanism, using a phosphorylated active-site intermediate. This chain is Nucleoside diphosphate kinase, found in Enterobacter sp. (strain 638).